The following is a 546-amino-acid chain: Chaperonin GroEL 2 (546 aa).

ATP is bound by residues 30–33 (TLGP), K51, 87–91 (DGTTT), G415, 479–481 (NAA), and D495.

Belongs to the chaperonin (HSP60) family. As to quaternary structure, forms a cylinder of 14 subunits composed of two heptameric rings stacked back-to-back. Interacts with the co-chaperonin GroES.

Its subcellular location is the cytoplasm. It carries out the reaction ATP + H2O + a folded polypeptide = ADP + phosphate + an unfolded polypeptide.. Its function is as follows. Together with its co-chaperonin GroES, plays an essential role in assisting protein folding. The GroEL-GroES system forms a nano-cage that allows encapsulation of the non-native substrate proteins and provides a physical environment optimized to promote and accelerate protein folding. The protein is Chaperonin GroEL 2 of Chromobacterium violaceum (strain ATCC 12472 / DSM 30191 / JCM 1249 / CCUG 213 / NBRC 12614 / NCIMB 9131 / NCTC 9757 / MK).